Reading from the N-terminus, the 450-residue chain is Large terminase protein homolog UL15b (450 aa).

This sequence belongs to the herpesviridae large terminase family.

The polypeptide is Large terminase protein homolog UL15b (UL15b) (Psittacid herpesvirus 1 (isolate Amazon parrot/-/97-0001/1997) (PsHV-1)).